Consider the following 197-residue polypeptide: Recombination protein RecR (197 aa).

A C4-type zinc finger spans residues 57-72 (CSVCFGITEDDPCHLC). Residues 79–174 (TTICVVEEPQ…RVTRLAHGIP (96 aa)) form the Toprim domain.

This sequence belongs to the RecR family.

May play a role in DNA repair. It seems to be involved in an RecBC-independent recombinational process of DNA repair. It may act with RecF and RecO. The chain is Recombination protein RecR from Geotalea daltonii (strain DSM 22248 / JCM 15807 / FRC-32) (Geobacter daltonii).